The chain runs to 387 residues: Protein RecA (387 aa).

Residue 80-87 (GPESSGKT) coordinates ATP. Residues 348–387 (LDDSEVAETEEETTASKTKAKAKKEEKAVETEEIELELED) form a disordered region. Acidic residues-rich tracts occupy residues 349 to 360 (DDSEVAETEEET) and 378 to 387 (TEEIELELED).

This sequence belongs to the RecA family.

It localises to the cytoplasm. Can catalyze the hydrolysis of ATP in the presence of single-stranded DNA, the ATP-dependent uptake of single-stranded DNA by duplex DNA, and the ATP-dependent hybridization of homologous single-stranded DNAs. It interacts with LexA causing its activation and leading to its autocatalytic cleavage. The chain is Protein RecA from Lactococcus lactis subsp. cremoris (strain MG1363).